A 232-amino-acid chain; its full sequence is uncharacterized protein (232 aa).

An N-terminal signal peptide occupies residues 1–18 (MGILKSLFTLGKSFISQA). A disordered region spans residues 207 to 232 (AEAGIGGSNKSSAQDVLARLQRQQGE).

This sequence belongs to the PspA/Vipp/IM30 family.

This is an uncharacterized protein from Escherichia coli O6:H1 (strain CFT073 / ATCC 700928 / UPEC).